Consider the following 323-residue polypeptide: Beta-ketoacyl-[acyl-carrier-protein] synthase III (323 aa).

Residues Cys-112 and His-250 contribute to the active site. An ACP-binding region spans residues 251–255 (QANYR). Asn-280 is an active-site residue.

This sequence belongs to the thiolase-like superfamily. FabH family. In terms of assembly, homodimer.

The protein localises to the cytoplasm. It carries out the reaction malonyl-[ACP] + acetyl-CoA + H(+) = 3-oxobutanoyl-[ACP] + CO2 + CoA. Its pathway is lipid metabolism; fatty acid biosynthesis. Its function is as follows. Catalyzes the condensation reaction of fatty acid synthesis by the addition to an acyl acceptor of two carbons from malonyl-ACP. Catalyzes the first condensation reaction which initiates fatty acid synthesis and may therefore play a role in governing the total rate of fatty acid production. Possesses both acetoacetyl-ACP synthase and acetyl transacylase activities. Its substrate specificity determines the biosynthesis of branched-chain and/or straight-chain of fatty acids. This is Beta-ketoacyl-[acyl-carrier-protein] synthase III from Clostridium beijerinckii (strain ATCC 51743 / NCIMB 8052) (Clostridium acetobutylicum).